The following is a 160-amino-acid chain: Small ribosomal subunit protein uS9 (160 aa).

Belongs to the universal ribosomal protein uS9 family.

This is Small ribosomal subunit protein uS9 from Mesorhizobium japonicum (strain LMG 29417 / CECT 9101 / MAFF 303099) (Mesorhizobium loti (strain MAFF 303099)).